The sequence spans 277 residues: Phosphonates import ATP-binding protein PhnC 2 (277 aa).

The ABC transporter domain occupies 3–251 (ISLNGISVQH…LLQALYAQHL (249 aa)). 40–47 (GPSGAGKT) is a binding site for ATP.

This sequence belongs to the ABC transporter superfamily. Phosphonates importer (TC 3.A.1.9.1) family. The complex is composed of two ATP-binding proteins (PhnC), two transmembrane proteins (PhnE) and a solute-binding protein (PhnD).

The protein resides in the cell inner membrane. The enzyme catalyses phosphonate(out) + ATP + H2O = phosphonate(in) + ADP + phosphate + H(+). In terms of biological role, part of the ABC transporter complex PhnCDE involved in phosphonates import. Responsible for energy coupling to the transport system. The polypeptide is Phosphonates import ATP-binding protein PhnC 2 (Albidiferax ferrireducens (strain ATCC BAA-621 / DSM 15236 / T118) (Rhodoferax ferrireducens)).